The chain runs to 209 residues: Kynurenine formamidase (209 aa).

Trp-18 is a binding site for substrate. Zn(2+) contacts are provided by His-48, His-52, and Asp-54. His-58 (proton donor/acceptor) is an active-site residue. Zn(2+)-binding residues include His-160 and Glu-172.

It belongs to the Cyclase 1 superfamily. KynB family. In terms of assembly, homodimer. Requires Zn(2+) as cofactor.

The enzyme catalyses N-formyl-L-kynurenine + H2O = L-kynurenine + formate + H(+). It participates in amino-acid degradation; L-tryptophan degradation via kynurenine pathway; L-kynurenine from L-tryptophan: step 2/2. Functionally, catalyzes the hydrolysis of N-formyl-L-kynurenine to L-kynurenine, the second step in the kynurenine pathway of tryptophan degradation. This is Kynurenine formamidase from Sphingopyxis alaskensis (strain DSM 13593 / LMG 18877 / RB2256) (Sphingomonas alaskensis).